The chain runs to 142 residues: Small heat shock protein IbpB (142 aa).

One can recognise a sHSP domain in the interval 25–136 (GQEPQGFPPY…QPQRIAIGTT (112 aa)).

Belongs to the small heat shock protein (HSP20) family. As to quaternary structure, homodimer. Forms homomultimers of about 100-150 subunits at optimal growth temperatures. Conformation changes to oligomers at high temperatures or high ionic concentrations. The decrease in size of the multimers is accompanied by an increase in chaperone activity.

Its subcellular location is the cytoplasm. In terms of biological role, associates with aggregated proteins, together with IbpA, to stabilize and protect them from irreversible denaturation and extensive proteolysis during heat shock and oxidative stress. Aggregated proteins bound to the IbpAB complex are more efficiently refolded and reactivated by the ATP-dependent chaperone systems ClpB and DnaK/DnaJ/GrpE. Its activity is ATP-independent. The chain is Small heat shock protein IbpB from Serratia proteamaculans (strain 568).